A 279-amino-acid polypeptide reads, in one-letter code: Ribosomal RNA small subunit methyltransferase A (279 aa).

S-adenosyl-L-methionine is bound by residues N27, L29, G54, E76, D102, and N127.

This sequence belongs to the class I-like SAM-binding methyltransferase superfamily. rRNA adenine N(6)-methyltransferase family. RsmA subfamily.

It is found in the cytoplasm. It catalyses the reaction adenosine(1518)/adenosine(1519) in 16S rRNA + 4 S-adenosyl-L-methionine = N(6)-dimethyladenosine(1518)/N(6)-dimethyladenosine(1519) in 16S rRNA + 4 S-adenosyl-L-homocysteine + 4 H(+). Its function is as follows. Specifically dimethylates two adjacent adenosines (A1518 and A1519) in the loop of a conserved hairpin near the 3'-end of 16S rRNA in the 30S particle. May play a critical role in biogenesis of 30S subunits. The polypeptide is Ribosomal RNA small subunit methyltransferase A (Mesorhizobium japonicum (strain LMG 29417 / CECT 9101 / MAFF 303099) (Mesorhizobium loti (strain MAFF 303099))).